The primary structure comprises 969 residues: RNA polymerase-associated protein RapA (969 aa).

Residues 164–334 enclose the Helicase ATP-binding domain; the sequence is EVGRRHAPRV…FARLRLLDSD (171 aa). Residue 177 to 184 participates in ATP binding; the sequence is DEVGLGKT. Positions 280 to 283 match the DEAH box motif; that stretch reads DEAH. The Helicase C-terminal domain occupies 492–668; the sequence is RVNWLLEKLK…GSNEALDDVI (177 aa).

This sequence belongs to the SNF2/RAD54 helicase family. RapA subfamily. Interacts with the RNAP. Has a higher affinity for the core RNAP than for the holoenzyme. Its ATPase activity is stimulated by binding to RNAP.

In terms of biological role, transcription regulator that activates transcription by stimulating RNA polymerase (RNAP) recycling in case of stress conditions such as supercoiled DNA or high salt concentrations. Probably acts by releasing the RNAP, when it is trapped or immobilized on tightly supercoiled DNA. Does not activate transcription on linear DNA. Probably not involved in DNA repair. This chain is RNA polymerase-associated protein RapA, found in Vibrio vulnificus (strain CMCP6).